The chain runs to 83 residues: Small ribosomal subunit protein bS18 (83 aa).

Belongs to the bacterial ribosomal protein bS18 family. As to quaternary structure, part of the 30S ribosomal subunit. Forms a tight heterodimer with protein bS6.

Binds as a heterodimer with protein bS6 to the central domain of the 16S rRNA, where it helps stabilize the platform of the 30S subunit. This Methylobacterium radiotolerans (strain ATCC 27329 / DSM 1819 / JCM 2831 / NBRC 15690 / NCIMB 10815 / 0-1) protein is Small ribosomal subunit protein bS18.